A 145-amino-acid polypeptide reads, in one-letter code: 3-dehydroquinate dehydratase (145 aa).

Residue Y22 is the Proton acceptor of the active site. 3 residues coordinate substrate: N73, H79, and D86. Residue H99 is the Proton donor of the active site. Residues 100–101 (LS) and R110 each bind substrate.

It belongs to the type-II 3-dehydroquinase family. In terms of assembly, homododecamer.

It carries out the reaction 3-dehydroquinate = 3-dehydroshikimate + H2O. The protein operates within metabolic intermediate biosynthesis; chorismate biosynthesis; chorismate from D-erythrose 4-phosphate and phosphoenolpyruvate: step 3/7. In terms of biological role, catalyzes a trans-dehydration via an enolate intermediate. In Prochlorococcus marinus (strain NATL1A), this protein is 3-dehydroquinate dehydratase.